A 621-amino-acid polypeptide reads, in one-letter code: Phosphatidylinositol-3,5-bisphosphate 3-phosphatase MTMR6 (621 aa).

Positions 1 to 101 constitute a GRAM domain; the sequence is MEHIRTTKVE…YNSLLQLSKQ (101 aa). The tract at residues 2–141 is interaction with RAB1B; sequence EHIRTTKVEQ…EEYKRMGVPN (140 aa). Y108 bears the Phosphotyrosine mark. The region spanning 124–499 is the Myotubularin phosphatase domain; the sequence is GWQLIDLAEE…FNFKFWRNMY (376 aa). N248, N273, and I274 together coordinate a 1,2-diacyl-sn-glycero-3-phospho-(1D-myo-inositol-3,5-bisphosphate). A 1,2-diacyl-sn-glycero-3-phospho-(1D-myo-inositol-3-phosphate) contacts are provided by N248, N273, and I274. C336 serves as the catalytic Phosphocysteine intermediate. A 1,2-diacyl-sn-glycero-3-phospho-(1D-myo-inositol-3,5-bisphosphate) contacts are provided by S337, D338, G339, W340, D341, R342, K378, and R382. Positions 337, 338, 339, 340, 341, and 342 each coordinate a 1,2-diacyl-sn-glycero-3-phospho-(1D-myo-inositol-3-phosphate). R382 is an a 1,2-diacyl-sn-glycero-3-phospho-(1D-myo-inositol-3-phosphate) binding site. Phosphoserine is present on residues S556, S561, S589, and S611.

This sequence belongs to the protein-tyrosine phosphatase family. Non-receptor class myotubularin subfamily. Homodimer. Heterodimer (via C-terminus) with MTMR9 (via C-terminus). Interacts with ALKBH4. Interacts with KCNN4. Interacts (via GRAM domain) with RAB1B (in GDP-bound form); the interaction regulates MTMR6 recruitment to the endoplasmic reticulum-Golgi intermediate compartment. Expressed in CD4+ T-cells.

It is found in the cytoplasm. It localises to the endoplasmic reticulum-Golgi intermediate compartment. Its subcellular location is the endoplasmic reticulum. The protein localises to the cell projection. The protein resides in the ruffle membrane. It is found in the perinuclear region. It catalyses the reaction a 1,2-diacyl-sn-glycero-3-phospho-(1D-myo-inositol-3,5-bisphosphate) + H2O = a 1,2-diacyl-sn-glycero-3-phospho-(1D-myo-inositol-5-phosphate) + phosphate. The catalysed reaction is a 1,2-diacyl-sn-glycero-3-phospho-(1D-myo-inositol-3-phosphate) + H2O = a 1,2-diacyl-sn-glycero-3-phospho-(1D-myo-inositol) + phosphate. It carries out the reaction 1,2-dioctanoyl-sn-glycero-3-phospho-(1D-myo-inositol-3,5-bisphosphate) + H2O = 1,2-dioctanoyl-sn-glycero-3-phospho-(1D-myo-inositol-5-phosphate) + phosphate. The enzyme catalyses 1,2-dioctanoyl-sn-glycero-3-phospho-(1-D-myo-inositol-3-phosphate) + H2O = 1,2-dioctanoyl-sn-glycero-3-phospho-(1D-myo-inositol) + phosphate. With respect to regulation, allosterically activated by phosphatidylserine and/or phosphatidylinositol 4-phosphate (PtdIns(4)P), and phosphatidylinositol 5-phosphate (PtdIns(5)P). Interaction with MTMR9 increases catalytic activity towards phosphatidylinositol 3,5-bisphosphate. In terms of biological role, lipid phosphatase that specifically dephosphorylates the D-3 position of phosphatidylinositol 3-phosphate and phosphatidylinositol 3,5-bisphosphate, generating phosphatidylinositol and phosphatidylinositol 5-phosphate. Binds with high affinity to phosphatidylinositol 3,5-bisphosphate (PtdIns(3,5)P2) but also to phosphatidylinositol 3-phosphate (PtdIns(3)P), phosphatidylinositol 4-phosphate (PtdIns(4)P), and phosphatidylinositol 5-phosphate (PtdIns(5)P), phosphatidic acid and phosphatidylserine. Negatively regulates ER-Golgi protein transport. Probably in association with MTMR9, plays a role in the late stages of macropinocytosis by dephosphorylating phosphatidylinositol 3-phosphate in membrane ruffles. Acts as a negative regulator of KCNN4/KCa3.1 channel activity in CD4(+) T-cells possibly by decreasing intracellular levels of phosphatidylinositol 3-phosphate. Negatively regulates proliferation of reactivated CD4(+) T-cells. In complex with MTMR9, negatively regulates DNA damage-induced apoptosis. The formation of the MTMR6-MTMR9 complex stabilizes both MTMR6 and MTMR9 protein levels. The polypeptide is Phosphatidylinositol-3,5-bisphosphate 3-phosphatase MTMR6 (Homo sapiens (Human)).